The primary structure comprises 88 residues: Small ribosomal subunit protein uS17 (88 aa).

It belongs to the universal ribosomal protein uS17 family. As to quaternary structure, part of the 30S ribosomal subunit.

Functionally, one of the primary rRNA binding proteins, it binds specifically to the 5'-end of 16S ribosomal RNA. This is Small ribosomal subunit protein uS17 from Stutzerimonas stutzeri (strain A1501) (Pseudomonas stutzeri).